We begin with the raw amino-acid sequence, 508 residues long: MNISILRLDSNPITTATSPATATANHRSGILGCYNGTYSCRLNQLQQRKKNPSIIVCSTTKPLASVVDRHGVSESGLSRIESLSQVSGVLGCQWGDEGKGKLVDILAKHFDIVARCQGGANAGHTIYNSEGKKFALHLVPSGILNEETVCVIGNGVVVHLPGLFKEIDGLESNGVSCQGRILVSDRAHLLFDFHQEIDGLREAELAKSFIGTTKRGIGPCYSSKVIRNGIRVSDLRHMDTFPQKLDRLLSDAAARFPGFKYGPEMLREEVERYKKFAERLEPFITDTVHFMNDAISQKKKILVEGGQATMLDIDFGTYPFVTSSSPSAGGICTGLGIAPRVVGDLVGVVKAYTTRVGSGPFPTEIMGKGGDLLRFAGQEFGTTTGRPRRCGWLDIVALRYCCQINGFASLNLTKLDVLSDLSEIQLGVTYRHPDGSILNSFPSDLRLLEQLKVEYEVLRGWQSDISSIRKYSDLPKSAREYVERIEELVGVPIHYIGIGPGRDALIYK.

The N-terminal 56 residues, 1 to 56 (MNISILRLDSNPITTATSPATATANHRSGILGCYNGTYSCRLNQLQQRKKNPSIIV), are a transit peptide targeting the chloroplast. Residues 95–101 (GDEGKGK) and 123–125 (GHT) each bind GTP. Residue Asp-96 is the Proton acceptor of the active site. Positions 96 and 123 each coordinate Mg(2+). Residues 96–99 (DEGK), 121–124 (NAGH), Thr-213, Arg-227, Gln-307, Thr-322, and Arg-386 each bind IMP. The Proton donor role is filled by His-124. Residue 382–388 (TTTGRPR) coordinates substrate. GTP contacts are provided by residues Arg-388, 414 to 416 (KLD), and 497 to 499 (GIG).

This sequence belongs to the adenylosuccinate synthetase family. Homodimer. It depends on Mg(2+) as a cofactor.

The protein resides in the plastid. It localises to the chloroplast. The catalysed reaction is IMP + L-aspartate + GTP = N(6)-(1,2-dicarboxyethyl)-AMP + GDP + phosphate + 2 H(+). The protein operates within purine metabolism; AMP biosynthesis via de novo pathway; AMP from IMP: step 1/2. Functionally, plays an important role in the de novo pathway and in the salvage pathway of purine nucleotide biosynthesis. Catalyzes the first committed step in the biosynthesis of AMP from IMP. The sequence is that of Adenylosuccinate synthetase 1, chloroplastic from Capsicum frutescens (Cayenne pepper).